We begin with the raw amino-acid sequence, 79 residues long: Small ribosomal subunit protein bS18 (79 aa).

Belongs to the bacterial ribosomal protein bS18 family. Part of the 30S ribosomal subunit. Forms a tight heterodimer with protein bS6.

In terms of biological role, binds as a heterodimer with protein bS6 to the central domain of the 16S rRNA, where it helps stabilize the platform of the 30S subunit. This Rhodopseudomonas palustris (strain BisB18) protein is Small ribosomal subunit protein bS18.